The following is a 598-amino-acid chain: Aspartate--tRNA(Asp/Asn) ligase (598 aa).

Glu-177 lines the L-aspartate pocket. Residues Gln-201–Lys-204 are aspartate. Arg-223 is a binding site for L-aspartate. ATP contacts are provided by residues Arg-223–Glu-225 and Gln-232. L-aspartate is bound at residue His-456. Glu-493 contributes to the ATP binding site. L-aspartate is bound at residue Arg-500. Gly-545–Arg-548 contributes to the ATP binding site.

It belongs to the class-II aminoacyl-tRNA synthetase family. Type 1 subfamily. In terms of assembly, homodimer.

It localises to the cytoplasm. The catalysed reaction is tRNA(Asx) + L-aspartate + ATP = L-aspartyl-tRNA(Asx) + AMP + diphosphate. Its function is as follows. Aspartyl-tRNA synthetase with relaxed tRNA specificity since it is able to aspartylate not only its cognate tRNA(Asp) but also tRNA(Asn). Reaction proceeds in two steps: L-aspartate is first activated by ATP to form Asp-AMP and then transferred to the acceptor end of tRNA(Asp/Asn). The chain is Aspartate--tRNA(Asp/Asn) ligase from Prochlorococcus marinus (strain MIT 9215).